The following is a 294-amino-acid chain: Protoheme IX farnesyltransferase (294 aa).

Transmembrane regions (helical) follow at residues 19–39 (PKQTFLLLLTSIFTYVGAGGM), 41–61 (LDALLLLTAAMLLSISGTTSV), 89–109 (VEALSFGLLLFIVGLGLSYLI), 111–131 (PWTAFATSLGMAFDILVYTMW), 138–158 (LSIIFGGVAGAAPSLAGWAAA), 166–186 (AIMIALITILWIPSHIWYISI), 218–238 (VLMIILQLLLFLMGPLGPIFL), and 272–292 (SPVEGVIFLAIALDGIFRILW).

This sequence belongs to the UbiA prenyltransferase family. Protoheme IX farnesyltransferase subfamily.

The protein resides in the cell membrane. The enzyme catalyses heme b + (2E,6E)-farnesyl diphosphate + H2O = Fe(II)-heme o + diphosphate. It functions in the pathway porphyrin-containing compound metabolism; heme O biosynthesis; heme O from protoheme: step 1/1. In terms of biological role, converts heme B (protoheme IX) to heme O by substitution of the vinyl group on carbon 2 of heme B porphyrin ring with a hydroxyethyl farnesyl side group. The polypeptide is Protoheme IX farnesyltransferase (Korarchaeum cryptofilum (strain OPF8)).